A 128-amino-acid chain; its full sequence is Glycine cleavage system H protein (128 aa).

The region spanning 24–105 (SLTIGVTDHA…AYAAWLFKLK (82 aa)) is the Lipoyl-binding domain. K65 carries the N6-lipoyllysine modification.

It belongs to the GcvH family. In terms of assembly, the glycine cleavage system is composed of four proteins: P, T, L and H. (R)-lipoate is required as a cofactor.

The glycine cleavage system catalyzes the degradation of glycine. The H protein shuttles the methylamine group of glycine from the P protein to the T protein. This chain is Glycine cleavage system H protein, found in Aromatoleum aromaticum (strain DSM 19018 / LMG 30748 / EbN1) (Azoarcus sp. (strain EbN1)).